The following is a 95-amino-acid chain: Large ribosomal subunit protein uL23 (95 aa).

It belongs to the universal ribosomal protein uL23 family. In terms of assembly, part of the 50S ribosomal subunit. Contacts protein L29, and trigger factor when it is bound to the ribosome.

Functionally, one of the early assembly proteins it binds 23S rRNA. One of the proteins that surrounds the polypeptide exit tunnel on the outside of the ribosome. Forms the main docking site for trigger factor binding to the ribosome. The chain is Large ribosomal subunit protein uL23 from Levilactobacillus brevis (strain ATCC 367 / BCRC 12310 / CIP 105137 / JCM 1170 / LMG 11437 / NCIMB 947 / NCTC 947) (Lactobacillus brevis).